The sequence spans 453 residues: Tubulin beta-1 chain (453 aa).

Positions 12, 71, 140, 144, 145, 146, 206, and 228 each coordinate GTP. Glu71 serves as a coordination point for Mg(2+). The disordered stretch occupies residues 431–453 (TADGVEGYEEEGYENDHPEDDEE). Positions 436 to 453 (EGYEEEGYENDHPEDDEE) are enriched in acidic residues.

The protein belongs to the tubulin family. In terms of assembly, dimer of alpha and beta chains. A typical microtubule is a hollow water-filled tube with an outer diameter of 25 nm and an inner diameter of 15 nM. Alpha-beta heterodimers associate head-to-tail to form protofilaments running lengthwise along the microtubule wall with the beta-tubulin subunit facing the microtubule plus end conferring a structural polarity. Microtubules usually have 13 protofilaments but different protofilament numbers can be found in some organisms and specialized cells. Requires Mg(2+) as cofactor.

It is found in the cytoplasm. It localises to the cytoskeleton. Functionally, tubulin is the major constituent of microtubules, a cylinder consisting of laterally associated linear protofilaments composed of alpha- and beta-tubulin heterodimers. Microtubules grow by the addition of GTP-tubulin dimers to the microtubule end, where a stabilizing cap forms. Below the cap, tubulin dimers are in GDP-bound state, owing to GTPase activity of alpha-tubulin. The sequence is that of Tubulin beta-1 chain (TUBB) from Chondrus crispus (Carrageen Irish moss).